We begin with the raw amino-acid sequence, 277 residues long: Large ribosomal subunit protein uL2 (277 aa).

The segment at 222–277 (GVAMNPVDHPHGGGEGRTSGGRHPVSPWGKPTKGKRTRSNKATDKFIMRTRHQRKK) is disordered.

This sequence belongs to the universal ribosomal protein uL2 family. Part of the 50S ribosomal subunit. Forms a bridge to the 30S subunit in the 70S ribosome.

In terms of biological role, one of the primary rRNA binding proteins. Required for association of the 30S and 50S subunits to form the 70S ribosome, for tRNA binding and peptide bond formation. It has been suggested to have peptidyltransferase activity; this is somewhat controversial. Makes several contacts with the 16S rRNA in the 70S ribosome. The chain is Large ribosomal subunit protein uL2 from Bartonella tribocorum (strain CIP 105476 / IBS 506).